A 561-amino-acid chain; its full sequence is ATP-dependent rRNA helicase RRP3 (561 aa).

2 stretches are compositionally biased toward low complexity: residues 1 to 23 (MPKA…SSNS) and 30 to 45 (ASSP…PSTS). The interval 1–109 (MPKASASSAK…DEKKVATIAD (109 aa)) is disordered. The segment covering 100 to 109 (DEKKVATIAD) has biased composition (basic and acidic residues). Residues 114 to 142 (VEFSDLGVIPQIVEACTNMGFKHPTPIQV) carry the Q motif motif. In terms of domain architecture, Helicase ATP-binding spans 145–316 (IPEALQARDV…RASLKNPVRV (172 aa)). 158 to 165 (AQTGSGKT) serves as a coordination point for ATP. Residues 264–267 (DEAD) carry the DEAD box motif. The 149-residue stretch at 339–487 (HKDTYLVHLA…EFPGGNDKEA (149 aa)) folds into the Helicase C-terminal domain. Positions 506–561 (LKDKGVGSAGGSGKRKRKMDGKYGDDMDRDDDQVQAGLPVSGNGRHQNQNRKKGRR) are disordered.

It belongs to the DEAD box helicase family. DDX47/RRP3 subfamily. Interacts with the SSU processome.

The protein resides in the nucleus. It catalyses the reaction ATP + H2O = ADP + phosphate + H(+). Functionally, ATP-dependent rRNA helicase required for pre-ribosomal RNA processing. Involved in the maturation of the 35S-pre-rRNA and to its cleavage to mature 18S rRNA. In Mycosarcoma maydis (Corn smut fungus), this protein is ATP-dependent rRNA helicase RRP3.